The sequence spans 424 residues: Histidine--tRNA ligase (424 aa).

This sequence belongs to the class-II aminoacyl-tRNA synthetase family. In terms of assembly, homodimer.

It is found in the cytoplasm. It carries out the reaction tRNA(His) + L-histidine + ATP = L-histidyl-tRNA(His) + AMP + diphosphate + H(+). The protein is Histidine--tRNA ligase of Shewanella frigidimarina (strain NCIMB 400).